The following is a 320-amino-acid chain: ATP-dependent 6-phosphofructokinase (320 aa).

Position 12 (G12) interacts with ATP. ADP is bound by residues 22 to 26 (RGVVR) and 55 to 60 (RYSVSD). Residues 73-74 (RF) and 103-106 (GDGS) each bind ATP. Mg(2+) is bound at residue D104. 126–128 (TID) is a binding site for substrate. D128 serves as the catalytic Proton acceptor. R155 contacts ADP. Residues R163 and 170 to 172 (MGR) each bind substrate. ADP-binding positions include 186 to 188 (GCE), K212, and 214 to 216 (KKH). Residues E223, R244, and 250 to 253 (HIQR) each bind substrate.

This sequence belongs to the phosphofructokinase type A (PFKA) family. ATP-dependent PFK group I subfamily. Prokaryotic clade 'B1' sub-subfamily. As to quaternary structure, homotetramer. Requires Mg(2+) as cofactor.

The protein resides in the cytoplasm. The enzyme catalyses beta-D-fructose 6-phosphate + ATP = beta-D-fructose 1,6-bisphosphate + ADP + H(+). It functions in the pathway carbohydrate degradation; glycolysis; D-glyceraldehyde 3-phosphate and glycerone phosphate from D-glucose: step 3/4. Its activity is regulated as follows. Allosterically activated by ADP and other diphosphonucleosides, and allosterically inhibited by phosphoenolpyruvate. In terms of biological role, catalyzes the phosphorylation of D-fructose 6-phosphate to fructose 1,6-bisphosphate by ATP, the first committing step of glycolysis. In Buchnera aphidicola subsp. Baizongia pistaciae (strain Bp), this protein is ATP-dependent 6-phosphofructokinase.